We begin with the raw amino-acid sequence, 371 residues long: Macronuclear solute carrier homolog CR-MSC (371 aa).

Solcar repeat units follow at residues 16–111 (RMNY…FYDK), 120–208 (ARPD…CKEN), and 215–304 (PHWI…LSQF). A run of 6 helical transmembrane segments spans residues 22-42 (FAAA…LDMV), 89-109 (TFFF…GYFY), 126-146 (VAAG…IDIV), 184-204 (AGAN…IYDW), 221-241 (LWGT…FDMI), and 281-301 (FGSF…ICYL).

Belongs to the mitochondrial carrier (TC 2.A.29) family.

The protein resides in the membrane. The chain is Macronuclear solute carrier homolog CR-MSC from Oxytricha trifallax (Sterkiella histriomuscorum).